A 487-amino-acid polypeptide reads, in one-letter code: N-succinylglutamate 5-semialdehyde dehydrogenase (487 aa).

Position 221 to 226 (221 to 226) interacts with NAD(+); that stretch reads GSSDTG. Residues Glu244 and Cys278 contribute to the active site.

This sequence belongs to the aldehyde dehydrogenase family. AstD subfamily.

It carries out the reaction N-succinyl-L-glutamate 5-semialdehyde + NAD(+) + H2O = N-succinyl-L-glutamate + NADH + 2 H(+). The protein operates within amino-acid degradation; L-arginine degradation via AST pathway; L-glutamate and succinate from L-arginine: step 4/5. Its function is as follows. Catalyzes the NAD-dependent reduction of succinylglutamate semialdehyde into succinylglutamate. The chain is N-succinylglutamate 5-semialdehyde dehydrogenase from Burkholderia mallei (strain ATCC 23344).